A 350-amino-acid chain; its full sequence is Probable dual-specificity RNA methyltransferase RlmN (350 aa).

Glu-98 serves as the catalytic Proton acceptor. The Radical SAM core domain maps to 104 to 334 (HTYGNSVCVS…VTVRRELGGD (231 aa)). Cys-111 and Cys-339 form a disulfide bridge. Cys-118, Cys-122, and Cys-125 together coordinate [4Fe-4S] cluster. Residues 165–166 (GE), Ser-197, 220–222 (SLH), and Asn-296 each bind S-adenosyl-L-methionine. Cys-339 acts as the S-methylcysteine intermediate in catalysis.

This sequence belongs to the radical SAM superfamily. RlmN family. Requires [4Fe-4S] cluster as cofactor.

The protein resides in the cytoplasm. It catalyses the reaction adenosine(2503) in 23S rRNA + 2 reduced [2Fe-2S]-[ferredoxin] + 2 S-adenosyl-L-methionine = 2-methyladenosine(2503) in 23S rRNA + 5'-deoxyadenosine + L-methionine + 2 oxidized [2Fe-2S]-[ferredoxin] + S-adenosyl-L-homocysteine. It carries out the reaction adenosine(37) in tRNA + 2 reduced [2Fe-2S]-[ferredoxin] + 2 S-adenosyl-L-methionine = 2-methyladenosine(37) in tRNA + 5'-deoxyadenosine + L-methionine + 2 oxidized [2Fe-2S]-[ferredoxin] + S-adenosyl-L-homocysteine. Specifically methylates position 2 of adenine 2503 in 23S rRNA and position 2 of adenine 37 in tRNAs. This chain is Probable dual-specificity RNA methyltransferase RlmN, found in Desulforamulus reducens (strain ATCC BAA-1160 / DSM 100696 / MI-1) (Desulfotomaculum reducens).